Consider the following 363-residue polypeptide: Phospho-N-acetylmuramoyl-pentapeptide-transferase (363 aa).

10 helical membrane-spanning segments follow: residues 33–53 (YAVL…GVLP), 82–102 (GVIF…PSFV), 105–125 (LILL…CAQV), 133–153 (GALD…FYFH), 166–186 (PVFV…WMSI), 198–218 (LSGA…YFLL), 227–247 (LLVP…ALAG), 271–291 (ALGF…LLLM), 295–315 (VILV…FFHV), and 340–360 (VLLR…GVLF).

Belongs to the glycosyltransferase 4 family. MraY subfamily. It depends on Mg(2+) as a cofactor.

It is found in the cell inner membrane. The enzyme catalyses UDP-N-acetyl-alpha-D-muramoyl-L-alanyl-gamma-D-glutamyl-meso-2,6-diaminopimeloyl-D-alanyl-D-alanine + di-trans,octa-cis-undecaprenyl phosphate = di-trans,octa-cis-undecaprenyl diphospho-N-acetyl-alpha-D-muramoyl-L-alanyl-D-glutamyl-meso-2,6-diaminopimeloyl-D-alanyl-D-alanine + UMP. Its pathway is cell wall biogenesis; peptidoglycan biosynthesis. Its function is as follows. Catalyzes the initial step of the lipid cycle reactions in the biosynthesis of the cell wall peptidoglycan: transfers peptidoglycan precursor phospho-MurNAc-pentapeptide from UDP-MurNAc-pentapeptide onto the lipid carrier undecaprenyl phosphate, yielding undecaprenyl-pyrophosphoryl-MurNAc-pentapeptide, known as lipid I. The protein is Phospho-N-acetylmuramoyl-pentapeptide-transferase of Treponema pallidum (strain Nichols).